The chain runs to 443 residues: Dynein regulatory complex protein 9 (443 aa).

2 disordered regions span residues 1-40 (MEEDSQEDSNLPPKVWHSEMTVSVTGKPPSTVEEDGLPKE) and 415-443 (GFKMPKDKVDSKDSKGKGKGKDKRRGKKK). The region spanning 393-422 (ELKSVIKLQAWWRGTMIRREIGGFKMPKDK) is the IQ domain. Positions 415-430 (GFKMPKDKVDSKDSKG) are enriched in basic and acidic residues. A compositionally biased stretch (basic residues) spans 431–443 (KGKGKDKRRGKKK).

The protein belongs to the DRC9 family. As to quaternary structure, component of the nexin-dynein regulatory complex (N-DRC). Interacts (via IQ domain) with CALM when calcium levels are low. Does not interact with CALM in the presence of Ca(2+). Interacts with the HSP70 proteins HSPA1L and HSPA8. May form a complex with CAMK4 and HSP70.

It is found in the cytoplasm. It localises to the cell projection. Its subcellular location is the cilium. The protein resides in the flagellum. The protein localises to the cytoskeleton. It is found in the flagellum axoneme. Component of the nexin-dynein regulatory complex (N-DRC), a key regulator of ciliary/flagellar motility which maintains the alignment and integrity of the distal axoneme and regulates microtubule sliding in motile axonemes. Binds calmodulin when cellular Ca(2+) levels are low and thereby contributes to the regulation of calcium and calmodulin-dependent protein kinase IV (CAMK4) activity; contributes to the regulation of CAMK4 signaling cascades. Required for normal axoneme assembly in sperm flagella, normal sperm tail formation and for male fertility. The sequence is that of Dynein regulatory complex protein 9 (IQCG) from Macaca fascicularis (Crab-eating macaque).